The chain runs to 1984 residues: MCQAEHQVHPSEQRIRVESPKMTASRRGFNLTSQTRAHPSSGGSTSSRYGNCQRTHLIINGRHVAISLLLLVGLCGGTAAGTPGSADTRCDAGQFQCRDGGCILQAKMCDGRGDCKDSSDELDCDYRLCRPPHWFPCAQPHGACLAAELMCNGIDNCPGGEDELNCPVRPGFRFGDTAHRMRSCSKYEFMCQQDRTCIPIDFMCDGRPDCTDKSDEVAGCKQAEITCPGEGHLCANGRCLRRKQWVCDGVDDCGDGSDERGCLNLCEPQKGKFLCRNRETCLTLSEVCDGHSDCSDGSDETDLCHSKPDCDAKKCALGAKCHMMPASGAECFCPKGFRLAKFEDKCEDVDECKEQDDLCSQGCENTSGGYRCVCDAGYLLDKDNRTCRAVVYGSKEQQPLLLYTTQMTIMGMHLREDNVRNHVYQVAGNLSKVIGVAYDGSHIYWTNIQNEAESIVKANGDGSNAEILLTSGLDAPEDLAVDWLTQNIYFSDNIMRHIAVCSNDGLNCAVLVTQDVHQPRSLAVWPQKGLMFWTDWGEKPMIGRASMDGSRSRPIVSDNIEWPNGIALDMHQQRIYWVDAKLGSVQTVRPDGTGRRTVLDGMLKHPYGLAIFEDQLYWSDWATKSVHACHKFSGKDHRILAKDRTIYAVHIYHPAKQPNSPHGCENATCSHLCLLAEPEIGGHSCACPDGMRLAPDHRRCMLMEKRQRLFIGLGQVLLEIEHTAFGRHQVSKSYTLPCLINEMVYNRINGSLIIADNDQRLILEFQPESHESNVLVRSNLGNVSALAFDHLSRNLYWADTERAVIEVLSLQTRHRALIRFFPGQEVPIGLTVMPAEGYLYVVLKAKRHSHIDKIPLSGKGEQVHVFEDDLGDDDIKLVTDYETQTIFWSDSDLGRISYSNYRVPHSQIFRGKLRRPYSLAMVHHDLFWNELGTPRIYWTHKSNMGPRKVIDIMEKDDPAAIMPYVPVATPNGIPLAASSPVGQESHPCQQQNGGCSHICVGEGPYHSICLCPAGFVYRDAGNRTCVEALDCEFRCHSGECLTMNHRCNGRRDCVDNSDEMNCDEEHRRKPKVLCSPNQFACHSGEQCVDKERRCDNRKDCHDHSDEQHCEKFDKSKKCHVHQHGCDNGKCVDSSLVCDGTNDCGDNSDELLCEATSRCEPGMFQCGSGSCIAGSWECDGRIDCSDGSDEHDKCVHRSCPPDMQRCLLGQCLDRSLVCDGHNDCGDKSDELNCGTDSSTMNISCAEDQYQCTSNLKICLPSTVRCNGTTECPRGEDEADCGDVCSIYEFKCRSGRECIRREFRCDGQKDCGDGSDELSCELEKGHHNQSQIQPWSTSSRSCRPHLFDCQDGECVDLSRVCNNFPDCTNGHDEGPKCATACRSASGRQVCQHKCRATPAGAVCSCFDGYRLDADQKSCLDIDECQEQQPCAQLCENTLGGYQCQCHADFMLRQDRVSCKSLQSGATLLFSSFNEVRNLSEQPVMLNVAWSANDSRITGFDLAMHRQMGYFSAEDEGIVYQIDLQTKVIVRALGLPAPTKLSVDWVTGNVYVLSGAQEIQACSFVGRMCGRIVHVKSPRHVKHLAVDGYHARIFYIVIRTEGYGQTSSEIHMARLDGSRRDMLLQRSESFMTALTTDPHQQLLYFVDQHMRTLERISYRLKTGPMRRPEIMLQKSNALMHPSGLSVYENNAFIVNLGSVEAVQCALYGSRICHKISINVLNAQDIVVAGRSRQPQKASHPCAHAHCHGLCLQADYGYECMCGNRLVAEGERCPHGSGNEVAVLGAVNSLELEHEHEQNGHFHWLMALFVLAAGSLIAGLGYMYYQYRQRGHTDLNINMHFQNPLATLGGTKAFLEHERAEAGVGFTTETGTVSSRGSNDTFTTTSATSSFAAQQFSVPNALQRLLRPRQSASGDPMAQELLLESPSRESKLHALDGGGAGGDGDGGRGVGRQVPDILVADMDDDAAKSAGQFGGNYAGNDANARFVS.

The segment covering 1-19 (MCQAEHQVHPSEQRIRVES) has biased composition (basic and acidic residues). The disordered stretch occupies residues 1-48 (MCQAEHQVHPSEQRIRVESPKMTASRRGFNLTSQTRAHPSSGGSTSSR). N-linked (GlcNAc...) asparagine glycosylation is present at asparagine 30. The segment covering 30 to 48 (NLTSQTRAHPSSGGSTSSR) has biased composition (polar residues). 5 LDL-receptor class A domains span residues 89–125 (RCDAGQFQCRDGGCILQAKMCDGRGDCKDSSDELDCD), 128–167 (LCRPPHWFPCAQPHGACLAAELMCNGIDNCPGGEDELNCP), 183–221 (SCSKYEFMCQQDRTCIPIDFMCDGRPDCTDKSDEVAGCK), 226–263 (TCPGEGHLCANGRCLRRKQWVCDGVDDCGDGSDERGCL), and 265–305 (LCEP…DLCH). 20 disulfides stabilise this stretch: cysteine 90–cysteine 102, cysteine 97–cysteine 115, cysteine 109–cysteine 124, cysteine 129–cysteine 144, cysteine 137–cysteine 157, cysteine 151–cysteine 166, cysteine 184–cysteine 197, cysteine 191–cysteine 210, cysteine 204–cysteine 220, cysteine 227–cysteine 239, cysteine 234–cysteine 253, cysteine 247–cysteine 262, cysteine 266–cysteine 281, cysteine 275–cysteine 294, cysteine 288–cysteine 304, cysteine 310–cysteine 321, cysteine 315–cysteine 331, cysteine 352–cysteine 363, cysteine 359–cysteine 372, and cysteine 374–cysteine 387. In terms of domain architecture, EGF-like 1 spans 306–343 (SKPDCDAKKCALGAKCHMMPASGAECFCPKGFRLAKFE). The EGF-like 2; calcium-binding domain maps to 348–388 (DVDECKEQDDLCSQGCENTSGGYRCVCDAGYLLDKDNRTCR). N-linked (GlcNAc...) asparagine glycosylation is found at asparagine 365, asparagine 384, and asparagine 429. LDL-receptor class B repeat units follow at residues 441-485 (SHIY…DWLT), 486-528 (QNIY…WPQK), 529-572 (GLMF…DMHQ), and 573-615 (QRIY…FEDQ). 3 N-linked (GlcNAc...) asparagine glycosylation sites follow: asparagine 666, asparagine 749, and asparagine 782. LDL-receptor class B repeat units lie at residues 750–792 (GSLI…DHLS), 793–836 (RNLY…MPAE), 884–925 (QTIF…VHHD), and 934–940 (PRIYWTH). N-linked (GlcNAc...) asparagine glycosylation is present at asparagine 1022. LDL-receptor class A domains lie at 1024-1063 (TCVEALDCEFRCHSGECLTMNHRCNGRRDCVDNSDEMNCD), 1073-1110 (LCSPNQFACHSGEQCVDKERRCDNRKDCHDHSDEQHCE), 1117-1153 (KCHVHQHGCDNGKCVDSSLVCDGTNDCGDNSDELLCE), 1157-1194 (RCEPGMFQCGSGSCIAGSWECDGRIDCSDGSDEHDKCV), and 1197-1233 (SCPPDMQRCLLGQCLDRSLVCDGHNDCGDKSDELNCG). 15 disulfide bridges follow: cysteine 1025-cysteine 1040, cysteine 1035-cysteine 1053, cysteine 1047-cysteine 1062, cysteine 1074-cysteine 1087, cysteine 1081-cysteine 1100, cysteine 1094-cysteine 1109, cysteine 1118-cysteine 1130, cysteine 1125-cysteine 1143, cysteine 1137-cysteine 1152, cysteine 1158-cysteine 1170, cysteine 1165-cysteine 1183, cysteine 1177-cysteine 1193, cysteine 1198-cysteine 1210, cysteine 1205-cysteine 1223, and cysteine 1217-cysteine 1232. Residue asparagine 1240 is glycosylated (N-linked (GlcNAc...) asparagine). 2 consecutive LDL-receptor class A domains span residues 1242–1280 (SCAEDQYQCTSNLKICLPSTVRCNGTTECPRGEDEADCG) and 1282–1319 (VCSIYEFKCRSGRECIRREFRCDGQKDCGDGSDELSCE). Cystine bridges form between cysteine 1243-cysteine 1257, cysteine 1250-cysteine 1270, cysteine 1264-cysteine 1279, cysteine 1283-cysteine 1296, cysteine 1290-cysteine 1309, and cysteine 1303-cysteine 1318. Asparagine 1265 carries N-linked (GlcNAc...) asparagine glycosylation. Asparagine 1326 carries N-linked (GlcNAc...) asparagine glycosylation. The LDL-receptor class A 13 domain maps to 1339 to 1376 (SCRPHLFDCQDGECVDLSRVCNNFPDCTNGHDEGPKCA). 5 disulfide bridges follow: cysteine 1340–cysteine 1352, cysteine 1347–cysteine 1365, cysteine 1359–cysteine 1375, cysteine 1422–cysteine 1432, and cysteine 1428–cysteine 1441. One can recognise an EGF-like 3; calcium-binding domain in the interval 1418–1453 (DIDECQEQQPCAQLCENTLGGYQCQCHADFMLRQDR). 2 N-linked (GlcNAc...) asparagine glycosylation sites follow: asparagine 1475 and asparagine 1490. 2 LDL-receptor class B repeats span residues 1588 to 1637 (ARIF…DPHQ) and 1638 to 1687 (QLLY…YENN). Residues 1800–1820 (WLMALFVLAAGSLIAGLGYMY) traverse the membrane as a helical segment. Over 1821-1984 (YQYRQRGHTD…GNDANARFVS (164 aa)) the chain is Cytoplasmic. Serine 1926 is subject to Phosphoserine. Disordered regions lie at residues 1927-1951 (KLHALDGGGAGGDGDGGRGVGRQVP) and 1965-1984 (SAGQFGGNYAGNDANARFVS). Gly residues predominate over residues 1932-1946 (DGGGAGGDGDGGRGV).

This sequence belongs to the LDLR family. Interacts with osk (isoform A). In terms of tissue distribution, ovary.

Its subcellular location is the cell membrane. The protein localises to the cytoplasm. It localises to the cell cortex. It is found in the cytoplasmic vesicle. The protein resides in the clathrin-coated vesicle membrane. Its subcellular location is the early endosome membrane. The protein localises to the endosome. It localises to the multivesicular body lumen. In terms of biological role, cell surface receptor involved in uptake of vitellogenins (yolk proteins) into developing oocytes by receptor-mediated endocytosis. May also mediate uptake of apolpp/apolipophorins and their incorporation into yolk granules. Along with its ligands, required for maintenance of microtubule plus-end orientation towards the posterior pole of oocytes. Involved in polarized localization of germ plasm components, such as osk mRNA and vas protein, to the oocyte posterior cortex. Receptor-mediated endocytosis of vitellogenin receptor ligands is critical for osk (isoform A) mediated actin reorganization and the anchoring of germ plasm components to the oocyte cortex. The sequence is that of Vitellogenin receptor Yl from Drosophila melanogaster (Fruit fly).